The sequence spans 570 residues: Hydroxylamine reductase (570 aa).

The [4Fe-4S] cluster site is built by Cys-5, Cys-8, Cys-17, and Cys-23. The hybrid [4Fe-2O-2S] cluster site is built by His-266, Glu-290, Cys-334, Cys-425, Cys-453, Cys-478, Glu-513, and Lys-515. At Cys-425 the chain carries Cysteine persulfide.

It belongs to the HCP family. It depends on [4Fe-4S] cluster as a cofactor. The cofactor is hybrid [4Fe-2O-2S] cluster.

The protein localises to the cytoplasm. It catalyses the reaction A + NH4(+) + H2O = hydroxylamine + AH2 + H(+). In terms of biological role, catalyzes the reduction of hydroxylamine to form NH(3) and H(2)O. The chain is Hydroxylamine reductase from Clostridium tetani (strain Massachusetts / E88).